Here is a 130-residue protein sequence, read N- to C-terminus: Prefoldin subunit alpha (130 aa).

The protein belongs to the prefoldin subunit alpha family. In terms of assembly, heterohexamer of two alpha and four beta subunits.

It localises to the cytoplasm. In terms of biological role, molecular chaperone capable of stabilizing a range of proteins. Seems to fulfill an ATP-independent, HSP70-like function in archaeal de novo protein folding. The polypeptide is Prefoldin subunit alpha (Thermoplasma volcanium (strain ATCC 51530 / DSM 4299 / JCM 9571 / NBRC 15438 / GSS1)).